The sequence spans 876 residues: Valine--tRNA ligase (876 aa).

The 'HIGH' region motif lies at 44–54; that stretch reads PNVTGKLHLGH. Positions 520–524 match the 'KMSKS' region motif; the sequence is KMSKS. Lysine 523 lines the ATP pocket. Positions 805–876 form a coiled coil; sequence LEGLIDMDKE…VKARIEQLKA (72 aa).

Belongs to the class-I aminoacyl-tRNA synthetase family. ValS type 1 subfamily. In terms of assembly, monomer.

Its subcellular location is the cytoplasm. The catalysed reaction is tRNA(Val) + L-valine + ATP = L-valyl-tRNA(Val) + AMP + diphosphate. In terms of biological role, catalyzes the attachment of valine to tRNA(Val). As ValRS can inadvertently accommodate and process structurally similar amino acids such as threonine, to avoid such errors, it has a 'posttransfer' editing activity that hydrolyzes mischarged Thr-tRNA(Val) in a tRNA-dependent manner. In Staphylococcus aureus (strain MRSA252), this protein is Valine--tRNA ligase.